Consider the following 188-residue polypeptide: Putative protein SSX6 (188 aa).

Disordered regions lie at residues 1 to 22 (MNGD…EKRS) and 74 to 188 (KRAT…EDDK). In terms of domain architecture, KRAB-related spans 20–83 (KRSKAFDDIA…KRATDSQRND (64 aa)). Composition is skewed to basic and acidic residues over residues 75 to 96 (RATD…EVER) and 112 to 122 (MPEKPAEEGSD). Ser-123 carries the post-translational modification Phosphoserine. A compositionally biased stretch (basic and acidic residues) spans 147-156 (SSEKIHERSG). The segment covering 157–170 (PKRGKHAWTHRLRE) has biased composition (basic residues). Residues 179-188 (EISDPEEDDK) show a composition bias toward acidic residues.

The protein belongs to the SSX family. Not detected in any normal tissues. Expressed in a melanoma cell line.

Functionally, could act as a modulator of transcription. The protein is Putative protein SSX6 of Homo sapiens (Human).